The following is a 155-amino-acid chain: Large ribosomal subunit protein uL16m (155 aa).

It belongs to the universal ribosomal protein uL16 family.

Its subcellular location is the mitochondrion. In Petunia hybrida (Petunia), this protein is Large ribosomal subunit protein uL16m (RPL16).